A 471-amino-acid polypeptide reads, in one-letter code: MNNENELLRQDILSYLEQHEKKDMLRFLTCGSVDDGKSTLIGRLLHDSKMIYEDQLAAITKDSKKVGTTGEKVDLALLVDGLQSEREQGITIDVAYRYFSTDKRKFIIADTPGHEQYTRNMVTGASTCDLAIILVDARGGVKVQTKRHSFLVSLLGIKHVIVAINKMDLMDYSEEVYKQIQEDYLKFAEQLDIPDIQFVPISALEGDNVVGKSEKTPWFDGTPLMEMLENIEIGEDDNLEDFRFPVQYVNRPNLDFRGFAGTVVSGQVAPGDEVTALPSGKKSKVKQVVTFEGDQERAYVPQAVTLTLEDEIDISRGDMIVKSDNLPLLNTQFKTHLVWMSEEPLMPNKQYLFKFATKSTPGVVAHIDNQIDVNTLEEADAMHLNLNEIGVVDVKFTQPVACDPYKRNRPTGSFIVIDRLTNGTVGAGMIIDEIAGDAQHTSPNFSEFELEFNALVRKHFPHWNSVDISKL.

Residues 22–239 (KDMLRFLTCG…NIEIGEDDNL (218 aa)) form the tr-type G domain. A G1 region spans residues 31–38 (GSVDDGKS). 31 to 38 (GSVDDGKS) provides a ligand contact to GTP. Positions 89–93 (GITID) are G2. The tract at residues 110–113 (DTPG) is G3. GTP-binding positions include 110–114 (DTPGH) and 165–168 (NKMD). A G4 region spans residues 165 to 168 (NKMD). Positions 202–204 (SAL) are G5.

Belongs to the TRAFAC class translation factor GTPase superfamily. Classic translation factor GTPase family. CysN/NodQ subfamily. Heterodimer composed of CysD, the smaller subunit, and CysN.

It carries out the reaction sulfate + ATP + H(+) = adenosine 5'-phosphosulfate + diphosphate. It functions in the pathway sulfur metabolism; hydrogen sulfide biosynthesis; sulfite from sulfate: step 1/3. In terms of biological role, with CysD forms the ATP sulfurylase (ATPS) that catalyzes the adenylation of sulfate producing adenosine 5'-phosphosulfate (APS) and diphosphate, the first enzymatic step in sulfur assimilation pathway. APS synthesis involves the formation of a high-energy phosphoric-sulfuric acid anhydride bond driven by GTP hydrolysis by CysN coupled to ATP hydrolysis by CysD. The protein is Sulfate adenylyltransferase subunit 1 of Alteromonas mediterranea (strain DSM 17117 / CIP 110805 / LMG 28347 / Deep ecotype).